We begin with the raw amino-acid sequence, 275 residues long: NH(3)-dependent NAD(+) synthetase (275 aa).

47–54 (GISGGQDS) serves as a coordination point for ATP. Position 53 (Asp-53) interacts with Mg(2+). Arg-139 lines the deamido-NAD(+) pocket. Position 159 (Thr-159) interacts with ATP. Residue Glu-164 participates in Mg(2+) binding. 2 residues coordinate deamido-NAD(+): Lys-172 and Asp-179. Residues Lys-188 and Thr-210 each contribute to the ATP site. 259–260 (HK) provides a ligand contact to deamido-NAD(+).

The protein belongs to the NAD synthetase family. Homodimer.

The enzyme catalyses deamido-NAD(+) + NH4(+) + ATP = AMP + diphosphate + NAD(+) + H(+). It participates in cofactor biosynthesis; NAD(+) biosynthesis; NAD(+) from deamido-NAD(+) (ammonia route): step 1/1. Functionally, catalyzes the ATP-dependent amidation of deamido-NAD to form NAD. Uses ammonia as a nitrogen source. This is NH(3)-dependent NAD(+) synthetase from Staphylococcus epidermidis (strain ATCC 35984 / DSM 28319 / BCRC 17069 / CCUG 31568 / BM 3577 / RP62A).